The chain runs to 237 residues: Methylthioribulose-1-phosphate dehydratase (237 aa).

Residue C97 participates in substrate binding. Residues H114 and H116 each contribute to the Zn(2+) site. The active-site Proton donor/acceptor is E143. Zn(2+) is bound at residue H199.

Belongs to the aldolase class II family. MtnB subfamily. Zn(2+) is required as a cofactor.

The protein resides in the cytoplasm. The catalysed reaction is 5-(methylsulfanyl)-D-ribulose 1-phosphate = 5-methylsulfanyl-2,3-dioxopentyl phosphate + H2O. Its pathway is amino-acid biosynthesis; L-methionine biosynthesis via salvage pathway; L-methionine from S-methyl-5-thio-alpha-D-ribose 1-phosphate: step 2/6. In terms of biological role, catalyzes the dehydration of methylthioribulose-1-phosphate (MTRu-1-P) into 2,3-diketo-5-methylthiopentyl-1-phosphate (DK-MTP-1-P). This chain is Methylthioribulose-1-phosphate dehydratase, found in Coccidioides posadasii (strain C735) (Valley fever fungus).